We begin with the raw amino-acid sequence, 596 residues long: NADH-quinone oxidoreductase subunit C/D (596 aa).

The interval 1-186 (MMNDNKYIHI…PAFTLTRKKE (186 aa)) is NADH dehydrogenase I subunit C. An NADH dehydrogenase I subunit D region spans residues 210–596 (DFMFLNLGPN…IDFVMSDVDR (387 aa)).

The protein in the N-terminal section; belongs to the complex I 30 kDa subunit family. This sequence in the C-terminal section; belongs to the complex I 49 kDa subunit family. NDH-1 is composed of 13 different subunits. Subunits NuoB, CD, E, F, and G constitute the peripheral sector of the complex.

The protein localises to the cell inner membrane. It catalyses the reaction a quinone + NADH + 5 H(+)(in) = a quinol + NAD(+) + 4 H(+)(out). Its function is as follows. NDH-1 shuttles electrons from NADH, via FMN and iron-sulfur (Fe-S) centers, to quinones in the respiratory chain. The immediate electron acceptor for the enzyme in this species is believed to be ubiquinone. Couples the redox reaction to proton translocation (for every two electrons transferred, four hydrogen ions are translocated across the cytoplasmic membrane), and thus conserves the redox energy in a proton gradient. In Blochmanniella floridana, this protein is NADH-quinone oxidoreductase subunit C/D.